We begin with the raw amino-acid sequence, 311 residues long: Ribonuclease Z (311 aa).

Positions 61, 63, 65, 66, 148, 216, and 275 each coordinate Zn(2+). Residue D65 is the Proton acceptor of the active site.

It belongs to the RNase Z family. Homodimer. Zn(2+) serves as cofactor.

It catalyses the reaction Endonucleolytic cleavage of RNA, removing extra 3' nucleotides from tRNA precursor, generating 3' termini of tRNAs. A 3'-hydroxy group is left at the tRNA terminus and a 5'-phosphoryl group is left at the trailer molecule.. In terms of biological role, zinc phosphodiesterase, which displays some tRNA 3'-processing endonuclease activity. Probably involved in tRNA maturation, by removing a 3'-trailer from precursor tRNA. The chain is Ribonuclease Z from Clostridium novyi (strain NT).